The following is a 522-amino-acid chain: 3-octaprenyl-4-hydroxybenzoate carboxy-lyase (522 aa).

Asn-181 is a binding site for Mn(2+). Residues 184–186, 198–200, and 203–204 each bind prenylated FMN; these read IYR, RWL, and RG. Glu-247 lines the Mn(2+) pocket. Asp-322 serves as the catalytic Proton donor.

This sequence belongs to the UbiD family. Homohexamer. It depends on prenylated FMN as a cofactor. Requires Mn(2+) as cofactor.

Its subcellular location is the cell membrane. The enzyme catalyses a 4-hydroxy-3-(all-trans-polyprenyl)benzoate + H(+) = a 2-(all-trans-polyprenyl)phenol + CO2. Its pathway is cofactor biosynthesis; ubiquinone biosynthesis. Functionally, catalyzes the decarboxylation of 3-octaprenyl-4-hydroxy benzoate to 2-octaprenylphenol, an intermediate step in ubiquinone biosynthesis. The sequence is that of 3-octaprenyl-4-hydroxybenzoate carboxy-lyase from Paraburkholderia xenovorans (strain LB400).